The primary structure comprises 495 residues: Pentatricopeptide repeat-containing protein PPR5 homolog, chloroplastic (495 aa).

The segment at 1–24 (MLAYPTTSSPWPPRHHGAAAAPAA) is disordered. The N-terminal 29 residues, 1 to 29 (MLAYPTTSSPWPPRHHGAAAAPAARRHMA), are a transit peptide targeting the chloroplast. PPR repeat units follow at residues 120–154 (DNGI…GCRP), 155–189 (DTSV…MKTI), 195–229 (NIVT…PVSP), 230–264 (DIYT…QCRP), 265–299 (DVIT…KEKP), 300–334 (THPT…GFKP), 335–365 (NYVT…LVSS), 370–404 (HLSS…GAVP), and 405–439 (SAST…GIVP). Residues 455–495 (DKKPRTVPSKNSASKPDVESANNSGTDTSSKPNLSVWQVAA) form a disordered region. The segment covering 462–495 (PSKNSASKPDVESANNSGTDTSSKPNLSVWQVAA) has biased composition (polar residues).

Belongs to the PPR family. P subfamily.

The protein resides in the plastid. It is found in the chloroplast. Functionally, involved in the biogenesis of the plastid translation machinery by promoting the splicing of group II introns in chloroplasts. This Oryza sativa subsp. japonica (Rice) protein is Pentatricopeptide repeat-containing protein PPR5 homolog, chloroplastic.